Consider the following 127-residue polypeptide: UPF0166 protein PYRAB06660 (127 aa).

This sequence belongs to the UPF0166 family.

The protein is UPF0166 protein PYRAB06660 of Pyrococcus abyssi (strain GE5 / Orsay).